A 205-amino-acid polypeptide reads, in one-letter code: Metal-independent carbonic anhydrase (205 aa).

Residues 1 to 24 (MNLFKPRILVLFAATALISGIAIV) form the signal peptide. Hydrogencarbonate-binding residues include threonine 106 and tyrosine 124.

Belongs to the iota-class carbonic anhydrase family. Homotetramer; dimer of dimers. Does not require a metal cofactor. is required as a cofactor.

It catalyses the reaction hydrogencarbonate + H(+) = CO2 + H2O. With respect to regulation, activity is not affected by EDTA or 2,6-pyridinedicarboxylic acid (PDA). Activity is not affected by addition of most divalent metal ions, except zinc ions which decrease the activity. Inhibited by the iodide ion. Catalyzes the hydration of carbon dioxide (CO2) to bicarbonate (HCO3(-)). Has only very low bicarbonate dehydration activity. May function even in metal-poor environments. The protein is Metal-independent carbonic anhydrase of Nostoc sp. (strain PCC 7120 / SAG 25.82 / UTEX 2576).